The sequence spans 197 residues: Rac-like GTP-binding protein 5 (197 aa).

Residue Gly-13 to Thr-20 coordinates GTP. An Effector region motif is present at residues Tyr-35 to Phe-43. GTP is bound by residues Asp-60 to Gln-64 and Thr-118 to Asp-121. Cysteine methyl ester is present on Cys-194. The S-geranylgeranyl cysteine moiety is linked to residue Cys-194. The propeptide at Ala-195–Leu-197 is removed in mature form.

Belongs to the small GTPase superfamily. Rho family.

It localises to the cytoplasm. Its subcellular location is the membrane. Its function is as follows. Inactive GDP-bound Rho GTPases reside in the cytosol, are found in a complex with Rho GDP-dissociation inhibitors (Rho GDIs), and are released from the GDI protein in order to translocate to membranes upon activation. The sequence is that of Rac-like GTP-binding protein 5 (RAC5) from Oryza sativa subsp. japonica (Rice).